A 59-amino-acid polypeptide reads, in one-letter code: Large ribosomal subunit protein uL30 (59 aa).

It belongs to the universal ribosomal protein uL30 family. As to quaternary structure, part of the 50S ribosomal subunit.

In Acetivibrio thermocellus (strain ATCC 27405 / DSM 1237 / JCM 9322 / NBRC 103400 / NCIMB 10682 / NRRL B-4536 / VPI 7372) (Clostridium thermocellum), this protein is Large ribosomal subunit protein uL30.